We begin with the raw amino-acid sequence, 221 residues long: Agamous-like MADS-box protein AGL14 (221 aa).

Residues 3 to 57 enclose the MADS-box domain; it reads RGKTEMKRIENATSRQVTFSKRRNGLLKKAFELSVLCDAEVALIIFSPRGKLYEF. A K-box domain is found at 87–177; the sequence is SQQSKDETYG…MEKCEMQGRG (91 aa).

In terms of assembly, interacts with AGL16. Preferentially expressed in roots. Expressed in lateral root cap, root epidermis, root endodermis, columella of the root meristematic region, the vascular cylinder in differentiated zones of the primary root and in emerged lateral root primordia. Expressed in pollen.

It localises to the nucleus. In terms of biological role, transcriptional activator that regulates root development by controlling meristem size and patterning of the root apical meristem. Regulates auxin transport and gradients in the root meristematic cells via direct regulation of the auxin efflux carrier PIN1 and PIN4 gene expression. Binds specifically to the CArG-box DNA sequences in the promoter regions of PIN1 and PIN4 genes. Involved in the regulation of shoot apical meristem (SAM) cell identities and transitions. Promotes flowering transition and participates in flower meristem maintenance and determinacy. Positively regulates TFL1 and WUS expression. Binds directly to the TFL1 regulatory sequences. The sequence is that of Agamous-like MADS-box protein AGL14 from Arabidopsis thaliana (Mouse-ear cress).